Here is a 108-residue protein sequence, read N- to C-terminus: Thioredoxin C-2 (108 aa).

In terms of domain architecture, Thioredoxin spans serine 2–isoleucine 108. Cysteine 33 and cysteine 36 are joined by a disulfide.

The protein belongs to the thioredoxin family.

Participates in various redox reactions through the reversible oxidation of its active center dithiol to a disulfide and catalyzes dithiol-disulfide exchange reactions. The protein is Thioredoxin C-2 of Corynebacterium nephridii.